The chain runs to 484 residues: uncharacterized protein (484 aa).

The FAD-binding PCMH-type domain maps to 47–226 (TLPIPAAVVK…TEVTVKIFKF (180 aa)).

Belongs to the FAD-binding oxidoreductase/transferase type 4 family.

This is an uncharacterized protein from Escherichia coli (strain K12).